The chain runs to 417 residues: Methylthioribose-1-phosphate isomerase (417 aa).

Aspartate 285 (proton donor) is an active-site residue.

It belongs to the eIF-2B alpha/beta/delta subunits family. MtnA subfamily.

It localises to the cytoplasm. The protein resides in the nucleus. It carries out the reaction 5-(methylsulfanyl)-alpha-D-ribose 1-phosphate = 5-(methylsulfanyl)-D-ribulose 1-phosphate. The protein operates within amino-acid biosynthesis; L-methionine biosynthesis via salvage pathway; L-methionine from S-methyl-5-thio-alpha-D-ribose 1-phosphate: step 1/6. In terms of biological role, catalyzes the interconversion of methylthioribose-1-phosphate (MTR-1-P) into methylthioribulose-1-phosphate (MTRu-1-P). In Lachancea thermotolerans (strain ATCC 56472 / CBS 6340 / NRRL Y-8284) (Yeast), this protein is Methylthioribose-1-phosphate isomerase.